The primary structure comprises 609 residues: Glutamine--fructose-6-phosphate aminotransferase [isomerizing] (609 aa).

The active-site Nucleophile; for GATase activity is Cys2. The region spanning 2-218 (CGIVGAIAQR…EGDIAEITRR (217 aa)) is the Glutamine amidotransferase type-2 domain. 2 SIS domains span residues 286–426 (ADEL…LKGL) and 458–599 (LAED…VDQP). The active-site For Fru-6P isomerization activity is the Lys604.

In terms of assembly, homodimer. In pull-down experiments interacts with CedA.

The protein resides in the cytoplasm. The catalysed reaction is D-fructose 6-phosphate + L-glutamine = D-glucosamine 6-phosphate + L-glutamate. Catalyzes the first step in hexosamine metabolism, converting fructose-6P into glucosamine-6P using glutamine as a nitrogen source. In Escherichia coli (strain K12), this protein is Glutamine--fructose-6-phosphate aminotransferase [isomerizing] (glmS).